The chain runs to 657 residues: Archaeal Lon protease (657 aa).

Over 1–123 the chain is Cytoplasmic; the sequence is MEENIESVEE…KAEREKRDRS (123 aa). 57–64 provides a ligand contact to ATP; it reads GEPGTGKS. The chain crosses the membrane as a helical span at residues 124–144; it reads RSIMFVIFSVVLLGIIAAIVL. Arginine 145 is a topological domain (extracellular). A helical membrane pass occupies residues 146 to 166; the sequence is SITLIFFAIMAAAFLYMAMAF. The Cytoplasmic segment spans residues 167–657; that stretch reads NPVIRNERAM…ATTRAGNNAA (491 aa). The 186-residue stretch at 433-618 folds into the Lon proteolytic domain; it reads GSVVGMVNGL…EDVLRVALVN (186 aa). Catalysis depends on residues serine 525 and lysine 568.

This sequence belongs to the peptidase S16 family. Archaeal LonB subfamily. Homohexamer. Organized in a ring with a central cavity.

It is found in the cell membrane. ATP-dependent serine protease that mediates the selective degradation of mutant and abnormal proteins as well as certain short-lived regulatory proteins. Degrades polypeptides processively. The sequence is that of Archaeal Lon protease from Thermoplasma acidophilum (strain ATCC 25905 / DSM 1728 / JCM 9062 / NBRC 15155 / AMRC-C165).